Here is a 199-residue protein sequence, read N- to C-terminus: Holliday junction branch migration complex subunit RuvA (199 aa).

A domain I region spans residues 1 to 65; that stretch reads MIGWLHGQII…EDALLLYGFL (65 aa). The interval 66 to 144 is domain II; the sequence is DKEERSLFRS…QFDGSVSDTF (79 aa). The flexible linker stretch occupies residues 144 to 148; that stretch reads FQKQA. A domain III region spans residues 149-199; it reads GSTHSQQEAISALEALGYKPQEAWKVVNKIDNGNKSCEQLIREALQILSSR.

This sequence belongs to the RuvA family. As to quaternary structure, homotetramer. Forms an RuvA(8)-RuvB(12)-Holliday junction (HJ) complex. HJ DNA is sandwiched between 2 RuvA tetramers; dsDNA enters through RuvA and exits via RuvB. An RuvB hexamer assembles on each DNA strand where it exits the tetramer. Each RuvB hexamer is contacted by two RuvA subunits (via domain III) on 2 adjacent RuvB subunits; this complex drives branch migration. In the full resolvosome a probable DNA-RuvA(4)-RuvB(12)-RuvC(2) complex forms which resolves the HJ.

It is found in the cytoplasm. Its function is as follows. The RuvA-RuvB-RuvC complex processes Holliday junction (HJ) DNA during genetic recombination and DNA repair, while the RuvA-RuvB complex plays an important role in the rescue of blocked DNA replication forks via replication fork reversal (RFR). RuvA specifically binds to HJ cruciform DNA, conferring on it an open structure. The RuvB hexamer acts as an ATP-dependent pump, pulling dsDNA into and through the RuvAB complex. HJ branch migration allows RuvC to scan DNA until it finds its consensus sequence, where it cleaves and resolves the cruciform DNA. The sequence is that of Holliday junction branch migration complex subunit RuvA from Legionella pneumophila (strain Paris).